The primary structure comprises 208 residues: Sodium/potassium-transporting ATPase subunit beta-1-interacting protein 2 (208 aa).

The next 4 membrane-spanning stretches (helical) occupy residues 1 to 23, 35 to 55, 64 to 84, and 148 to 168; these read MGYC…CVLE, APIL…FGTI, GYAV…CFYL, and VAHS…ACYV.

It belongs to the NKAIN family. As to quaternary structure, interacts with ATP1B1. Detected in the brain only and specifically in neurons; expressed in multiple regions such as cerebral cortex, thalamus, cerebellum, olfactory bulb and brainstem, but not in the hippocampus.

Its subcellular location is the cell membrane. The chain is Sodium/potassium-transporting ATPase subunit beta-1-interacting protein 2 (Nkain2) from Mus musculus (Mouse).